A 264-amino-acid chain; its full sequence is Apolipoprotein A-I (264 aa).

An N-terminal signal peptide occupies residues 1–18 (MRVVVVTLALLFLTGTQA). 2 repeat units span residues 67 to 88 (LKLA…EDMA) and 89 to 110 (PYYK…AELT). The 10 X approximate tandem repeats stretch occupies residues 67-264 (LKLADNLDTL…LLDELQKTVA (198 aa)). Residues 111 to 121 (KDLEEVKEKIR) form a 3; half-length repeat. Tandem repeats lie at residues 122–143 (PFLD…QRLA), 144–165 (PVAE…QKLT), 166–187 (PVAE…KNLA), 188–209 (PYSD…EKGI), and 210–231 (PQAA…EKMT). Residues 232–242 (PLVQDFKERLT) form a 9; half-length repeat. Repeat unit 10 spans residues 243–264 (PYAENLKTRFISLLDELQKTVA).

The protein belongs to the apolipoprotein A1/A4/E family. As to expression, major protein of plasma HDL, also found in chylomicrons.

It is found in the secreted. In terms of biological role, participates in the reverse transport of cholesterol from tissues to the liver for excretion by promoting cholesterol efflux from tissues and by acting as a cofactor for the lecithin cholesterol acyltransferase (LCAT). The protein is Apolipoprotein A-I (APOA1) of Anas platyrhynchos (Mallard).